The chain runs to 633 residues: DNA-directed RNA polymerase subunit gamma (633 aa).

Zn(2+)-binding residues include C74, C76, C89, and C92. Residues D471, D473, and D475 each coordinate Mg(2+).

The protein belongs to the RNA polymerase beta' chain family. RpoC1 subfamily. As to quaternary structure, in cyanobacteria the RNAP catalytic core is composed of 2 alpha, 1 beta, 1 beta', 1 gamma and 1 omega subunit. When a sigma factor is associated with the core the holoenzyme is formed, which can initiate transcription. It depends on Mg(2+) as a cofactor. The cofactor is Zn(2+).

It carries out the reaction RNA(n) + a ribonucleoside 5'-triphosphate = RNA(n+1) + diphosphate. Functionally, DNA-dependent RNA polymerase catalyzes the transcription of DNA into RNA using the four ribonucleoside triphosphates as substrates. The chain is DNA-directed RNA polymerase subunit gamma from Prochlorococcus marinus (strain MIT 9211).